Reading from the N-terminus, the 173-residue chain is Small ribosomal subunit protein mS25 (173 aa).

This sequence belongs to the mitochondrion-specific ribosomal protein mS25 family. As to quaternary structure, component of the mitochondrial small ribosomal subunit (mt-SSU). Mature mammalian 55S mitochondrial ribosomes consist of a small (28S) and a large (39S) subunit. The 28S small subunit contains a 12S ribosomal RNA (12S mt-rRNA) and 30 different proteins. The 39S large subunit contains a 16S rRNA (16S mt-rRNA), a copy of mitochondrial valine transfer RNA (mt-tRNA(Val)), which plays an integral structural role, and 52 different proteins.

Its subcellular location is the mitochondrion. The chain is Small ribosomal subunit protein mS25 (MRPS25) from Homo sapiens (Human).